A 415-amino-acid chain; its full sequence is MKTKFVVEKSPPLKGTVKISGAKNSVLPIIAASLLSSDEVILEDIPSLEDVNVMIELIKNFGALCELDNGKLKIKVDIKDVEAPYELVKKMRASFLVMGPILAKLGHAKISMPGGCAIGARPIDLHLKGFQSLGADITIGHGYVEARAKKLTGKKIYLDFPSVGATENIMMAAVFADGVTVIENAAEEPEIVDLANFLNKMGANIKGAGTDTIRIEGVKELKGAEHTVIPDRIEAGTFMVAAAMTGGNVLIENVIVDHVRSVIAKLTECGVKITEEKGGLRVKGVKNYKAVDIKTLPYPGFPTDMQAQMMAMMTVAKGTSVIIETVFENRFMHVSELKRMGANIKIEGRSAMITGVDHLTGAEVKATDLRAGAALVLAGLIAEGRTEINDIYHVDRGYVKMEEKLRALGAKIYRK.

Position 23 to 24 (23 to 24 (KN)) interacts with phosphoenolpyruvate. Arg-92 provides a ligand contact to UDP-N-acetyl-alpha-D-glucosamine. Cys-116 (proton donor) is an active-site residue. A 2-(S-cysteinyl)pyruvic acid O-phosphothioketal modification is found at Cys-116. Residues 121-125 (RPIDL), Asp-304, and Val-326 contribute to the UDP-N-acetyl-alpha-D-glucosamine site.

The protein belongs to the EPSP synthase family. MurA subfamily.

The protein localises to the cytoplasm. It carries out the reaction phosphoenolpyruvate + UDP-N-acetyl-alpha-D-glucosamine = UDP-N-acetyl-3-O-(1-carboxyvinyl)-alpha-D-glucosamine + phosphate. Its pathway is cell wall biogenesis; peptidoglycan biosynthesis. Functionally, cell wall formation. Adds enolpyruvyl to UDP-N-acetylglucosamine. In Caldanaerobacter subterraneus subsp. tengcongensis (strain DSM 15242 / JCM 11007 / NBRC 100824 / MB4) (Thermoanaerobacter tengcongensis), this protein is UDP-N-acetylglucosamine 1-carboxyvinyltransferase 1.